Consider the following 307-residue polypeptide: Elongation factor Ts (307 aa).

Residues 80 to 83 (TDFV) are involved in Mg(2+) ion dislocation from EF-Tu.

Belongs to the EF-Ts family.

It is found in the cytoplasm. Its function is as follows. Associates with the EF-Tu.GDP complex and induces the exchange of GDP to GTP. It remains bound to the aminoacyl-tRNA.EF-Tu.GTP complex up to the GTP hydrolysis stage on the ribosome. The polypeptide is Elongation factor Ts (Clostridium botulinum (strain 657 / Type Ba4)).